The following is a 1052-amino-acid chain: Membrane-bound transcription factor site-1 protease (1052 aa).

The N-terminal stretch at methionine 1–glycine 17 is a signal peptide. The propeptide occupies lysine 18–leucine 186. A glycan (N-linked (GlcNAc...) asparagine) is linked at asparagine 148. Serine 168 is subject to Phosphoserine. Residues arginine 187–glycine 999 lie on the Lumenal side of the membrane. In terms of domain architecture, Peptidase S8 spans proline 190–tyrosine 472. Aspartate 218 (charge relay system) is an active-site residue. Residue asparagine 236 is glycosylated (N-linked (GlcNAc...) asparagine). The Charge relay system role is filled by histidine 249. The N-linked (GlcNAc...) asparagine glycan is linked to asparagine 305. Serine 414 functions as the Charge relay system in the catalytic mechanism. Residues asparagine 515 and asparagine 728 are each glycosylated (N-linked (GlcNAc...) asparagine). The span at proline 877–arginine 887 shows a compositional bias: polar residues. The segment at proline 877–methionine 900 is disordered. Asparagine 939 carries an N-linked (GlcNAc...) asparagine glycan. A helical transmembrane segment spans residues glutamine 1000–serine 1022. The Cytoplasmic portion of the chain corresponds to lysine 1023–valine 1052. A compositionally biased stretch (basic residues) spans serine 1026 to arginine 1037. The interval serine 1026–valine 1052 is disordered.

Belongs to the peptidase S8 family. Interacts with LYSET; this interaction bridges GNPTAB to MBTPS1. Ca(2+) serves as cofactor. Post-translationally, the 148 kDa zymogen is processed progressively into two membrane-bound 120 and 106 kDa forms in the endoplasmic reticulum, and late into a secreted 98 kDa form. The propeptide is autocatalytically removed through an intramolecular cleavage after Leu-186. Further cleavage generates 14, 10, and 8 kDa intermediates.

The protein resides in the endoplasmic reticulum membrane. Its subcellular location is the golgi apparatus membrane. It carries out the reaction Processes precursors containing basic and hydrophobic/aliphatic residues at P4 and P2, respectively, with a relatively relaxed acceptance of amino acids at P1 and P3.. Its activity is regulated as follows. Inhibited by divalent copper and zinc ions, but not by nickel or cobalt. Inhibited by its prosegment, but not smaller fragments. Inhibited by 4-(2-aminoethyl)benzenesulfonyl fluoride (AEBSF), a serine protease inhibitor. In terms of biological role, serine protease that cleaves after hydrophobic or small residues, provided that Arg or Lys is in position P4: known substrates include SREBF1/SREBP1, SREBF2/SREBP2, BDNF, GNPTAB, ATF6, ATF6B and FAM20C. Cleaves substrates after Arg-Ser-Val-Leu (SREBP2), Arg-His-Leu-Leu (ATF6), Arg-Gly-Leu-Thr (BDNF) and its own propeptide after Arg-Arg-Leu-Leu. Catalyzes the first step regulated intramembrane proteolysis activation of the sterol regulatory element-binding proteins (SREBPs) SREBF1/SREBP1 and SREBF2/SREBP2. Also mediates the first step of the regulated intramembrane proteolytic activation of the cyclic AMP-dependent transcription factor ATF-6 (ATF6 and ATF6B). Mediates the protein cleavage of GNPTAB into subunit alpha and beta, thereby participating in biogenesis of lysosomes. Cleaves the propeptide from FAM20C which is required for FAM20C secretion from the Golgi apparatus membrane and for enhancement of FAM20C kinase activity, promoting osteoblast differentiation and biomineralization. Involved in the regulation of M6P-dependent Golgi-to-lysosome trafficking of lysosomal enzymes. It is required for the activation of CREB3L2/BBF2H7, a transcriptional activator of MIA3/TANGO and other genes controlling mega vesicle formation. Therefore, it plays a key role in the regulation of mega vesicle-mediated collagen trafficking. In astrocytes and osteoblasts, upon DNA damage and ER stress, mediates the first step of the regulated intramembrane proteolytic activation of the transcription factor CREB3L1, leading to the inhibition of cell-cycle progression. The protein is Membrane-bound transcription factor site-1 protease (Mbtps1) of Mus musculus (Mouse).